Consider the following 201-residue polypeptide: Recombination protein RecR (201 aa).

The C4-type zinc-finger motif lies at 57-72; it reads CADCRTFTEQDVCNIC. Positions 81–176 constitute a Toprim domain; sequence GQICVVESPA…EASRIAHGVP (96 aa).

The protein belongs to the RecR family.

Its function is as follows. May play a role in DNA repair. It seems to be involved in an RecBC-independent recombinational process of DNA repair. It may act with RecF and RecO. The protein is Recombination protein RecR of Citrobacter koseri (strain ATCC BAA-895 / CDC 4225-83 / SGSC4696).